Here is a 1173-residue protein sequence, read N- to C-terminus: SMC5-SMC6 complex localization factor protein 2 (1173 aa).

The interval 1 to 109 is disordered; sequence MTRRCMPARP…KPKRVPPEKS (109 aa). 2 stretches are compositionally biased toward basic and acidic residues: residues 39 to 50 and 88 to 106; these read KRTESPGDRKQS and QFER…RVPP. Positions 137 to 149 match the APIM motif motif; the sequence is SLASKYLAKGTNI. Disordered stretches follow at residues 161–230, 256–275, 280–373, 394–620, and 635–663; these read MKSL…PEES, QMEQ…SLSL, ERKY…QKEK, KEPS…EEET, and TPAA…VHPG. Residues 181–199 show a composition bias toward basic and acidic residues; it reads ENNEKNDRDRGKTNADSKK. 2 stretches are compositionally biased toward low complexity: residues 212–221 and 262–275; these read SSRSLSSRSS and NSEN…SLSL. The segment covering 280–293 has biased composition (basic and acidic residues); sequence ERKYKPRQEQRKQN. The span at 317-330 shows a compositional bias: polar residues; sequence SDSWEPTSAGSKQN. 2 stretches are compositionally biased toward basic and acidic residues: residues 339 to 349 and 355 to 373; these read NSVDSDLKSTR and KARE…QKEK. Over residues 409-428 the composition is skewed to polar residues; the sequence is PSNSGNSGHHSTRNSDQIQV. Residue S481 is modified to Phosphoserine. Positions 499–520 are enriched in basic and acidic residues; the sequence is SKKDKERSSSKECSGHSTESTK. Low complexity predominate over residues 571 to 592; it reads APSDKAPSEGESSGNSNAGSSA. Residues 602–619 are compositionally biased toward acidic residues; sequence DSDEESLGYNLDSDEEEE. Phosphoserine is present on residues S603, S607, and S614. The segment at 635-1173 is interaction with SIMC1; the sequence is TPAATGKPPA…QLHDFWVPDS (539 aa). Positions 664 to 1166 are NSE6-like domain; it reads TYTNTLERLV…NCRPTQGQLH (503 aa). Positions 702 to 1173 are required for interaction with SLF1 and RAD18; it reads PIRIGEEDST…QLHDFWVPDS (472 aa).

The protein belongs to the FAM178 family. In terms of assembly, forms a heterodimer with SIMC1. Interacts with SLF1 (via N-terminus); this interaction links RAD18 to the SMC5-SMC6 complex. Interacts with RAD18; this interaction is increased in a SLF1-dependent manner. Interacts with SMC5 and SMC6. As to expression, widely expressed. Expressed at higher level in skeletal muscle and at slightly lower level in brain, liver and heart, than in lung, kidney, spleen and thymus.

The protein localises to the nucleus. It is found in the PML body. In terms of biological role, plays a role in the DNA damage response (DDR) pathway by regulating postreplication repair of UV-damaged DNA and genomic stability maintenance. The SLF1-SLF2 complex acts to link RAD18 with the SMC5-SMC6 complex at replication-coupled interstrand cross-links (ICL) and DNA double-strand breaks (DSBs) sites on chromatin during DNA repair in response to stalled replication forks. Promotes the recruitment of the SMC5-SMC6 complex to DNA lesions. Plays a role in SMC5-SMC6 complex recruitment for viral restriction. Forms a complex with SIMC1 and this complex is required to recruit SMC5-SMC6 complex to PML nuclear bodies and sites of viral replication. In Homo sapiens (Human), this protein is SMC5-SMC6 complex localization factor protein 2.